We begin with the raw amino-acid sequence, 551 residues long: Arginine--tRNA ligase (551 aa).

The 'HIGH' region signature appears at 124–134 (ANPTGPLHIGH).

The protein belongs to the class-I aminoacyl-tRNA synthetase family. Monomer.

Its subcellular location is the cytoplasm. The enzyme catalyses tRNA(Arg) + L-arginine + ATP = L-arginyl-tRNA(Arg) + AMP + diphosphate. The protein is Arginine--tRNA ligase of Solidesulfovibrio magneticus (strain ATCC 700980 / DSM 13731 / RS-1) (Desulfovibrio magneticus).